The following is a 180-amino-acid chain: Pro-glucagon (180 aa).

Residues 1 to 20 form the signal peptide; that stretch reads MKTIYFVAGLFVMLVQGSWQ. The disordered stretch occupies residues 25–59; it reads NTEEKSRSFPAPQTDPLDDPDQMTEDKRHSQGTFT. S54 carries the post-translational modification Phosphoserine. The propeptide occupies 84–89; it reads NKNNIA. 2 positions are modified to phosphoserine: S105 and S108. An Arginine amide modification is found at R127. The propeptide occupies 131 to 145; the sequence is DFPEEVTIVEELRRR. Residues S150 and S152 each carry the phosphoserine modification.

The protein belongs to the glucagon family. Proglucagon is post-translationally processed in a tissue-specific manner in pancreatic A cells and intestinal L cells. In pancreatic A cells, the major bioactive hormone is glucagon cleaved by PCSK2/PC2. In the intestinal L cells PCSK1/PC1 liberates GLP-1, GLP-2, glicentin and oxyntomodulin. GLP-1 is further N-terminally truncated by post-translational processing in the intestinal L cells resulting in GLP-1(7-37) GLP-1-(7-36)amide. The C-terminal amidation is neither important for the metabolism of GLP-1 nor for its effects on the endocrine pancreas. As to expression, glucagon is secreted in the A cells of the islets of Langerhans. GLP-1, GLP-2, oxyntomodulin and glicentin are secreted from enteroendocrine cells throughout the gastrointestinal tract. GLP-1 and GLP-2 are also secreted in selected neurons in the brain.

It localises to the secreted. In terms of biological role, plays a key role in glucose metabolism and homeostasis. Regulates blood glucose by increasing gluconeogenesis and decreasing glycolysis. A counterregulatory hormone of insulin, raises plasma glucose levels in response to insulin-induced hypoglycemia. Plays an important role in initiating and maintaining hyperglycemic conditions in diabetes. Potent stimulator of glucose-dependent insulin release. Also stimulates insulin release in response to IL6. Plays important roles on gastric motility and the suppression of plasma glucagon levels. May be involved in the suppression of satiety and stimulation of glucose disposal in peripheral tissues, independent of the actions of insulin. Has growth-promoting activities on intestinal epithelium. May also regulate the hypothalamic pituitary axis (HPA) via effects on LH, TSH, CRH, oxytocin, and vasopressin secretion. Increases islet mass through stimulation of islet neogenesis and pancreatic beta cell proliferation. Inhibits beta cell apoptosis. Its function is as follows. Stimulates intestinal growth and up-regulates villus height in the small intestine, concomitant with increased crypt cell proliferation and decreased enterocyte apoptosis. The gastrointestinal tract, from the stomach to the colon is the principal target for GLP-2 action. Plays a key role in nutrient homeostasis, enhancing nutrient assimilation through enhanced gastrointestinal function, as well as increasing nutrient disposal. Stimulates intestinal glucose transport and decreases mucosal permeability. Functionally, significantly reduces food intake. Inhibits gastric emptying in humans. Suppression of gastric emptying may lead to increased gastric distension, which may contribute to satiety by causing a sensation of fullness. In terms of biological role, may modulate gastric acid secretion and the gastro-pyloro-duodenal activity. May play an important role in intestinal mucosal growth in the early period of life. The chain is Pro-glucagon (GCG) from Sus scrofa (Pig).